A 430-amino-acid chain; its full sequence is Serine--tRNA ligase (430 aa).

237-239 is a binding site for L-serine; sequence TAE. Residue 268–270 coordinates ATP; it reads RSE. E291 contributes to the L-serine binding site. An ATP-binding site is contributed by 355-358; the sequence is EISS. S391 is an L-serine binding site.

This sequence belongs to the class-II aminoacyl-tRNA synthetase family. Type-1 seryl-tRNA synthetase subfamily. As to quaternary structure, homodimer. The tRNA molecule binds across the dimer.

The protein localises to the cytoplasm. It carries out the reaction tRNA(Ser) + L-serine + ATP = L-seryl-tRNA(Ser) + AMP + diphosphate + H(+). It catalyses the reaction tRNA(Sec) + L-serine + ATP = L-seryl-tRNA(Sec) + AMP + diphosphate + H(+). Its pathway is aminoacyl-tRNA biosynthesis; selenocysteinyl-tRNA(Sec) biosynthesis; L-seryl-tRNA(Sec) from L-serine and tRNA(Sec): step 1/1. Catalyzes the attachment of serine to tRNA(Ser). Is also able to aminoacylate tRNA(Sec) with serine, to form the misacylated tRNA L-seryl-tRNA(Sec), which will be further converted into selenocysteinyl-tRNA(Sec). This Salmonella enteritidis PT4 (strain P125109) protein is Serine--tRNA ligase.